Reading from the N-terminus, the 382-residue chain is D-galactonate dehydratase (382 aa).

Asp-183 provides a ligand contact to Mg(2+). His-185 functions as the Proton donor in the catalytic mechanism. Positions 209 and 235 each coordinate Mg(2+). His-285 (proton acceptor) is an active-site residue.

It belongs to the mandelate racemase/muconate lactonizing enzyme family. GalD subfamily. The cofactor is Mg(2+).

The catalysed reaction is D-galactonate = 2-dehydro-3-deoxy-D-galactonate + H2O. It functions in the pathway carbohydrate acid metabolism; D-galactonate degradation; D-glyceraldehyde 3-phosphate and pyruvate from D-galactonate: step 1/3. Catalyzes the dehydration of D-galactonate to 2-keto-3-deoxy-D-galactonate. The chain is D-galactonate dehydratase from Escherichia coli (strain 55989 / EAEC).